The following is a 171-amino-acid chain: Disulfide bond formation protein B (171 aa).

Residues 1–13 (MTFISNLADTRLA) are Cytoplasmic-facing. A helical transmembrane segment spans residues 14 to 30 (WGLLFLSALVLVAYALF). Residues 31–48 (SQHAMGLQPCIMCIYQRT) lie on the Periplasmic side of the membrane. C40 and C43 form a disulfide bridge. Residues 49–63 (AIFGIMFACVPVLAA) traverse the membrane as a helical segment. Over 64-70 (NNMLTRL) the chain is Cytoplasmic. A helical membrane pass occupies residues 71–88 (FAFTVWGISAIWGGLIAW). Residues 89–144 (EHYDIQNAANPFFATCEIVPNFPSWLPLHEWLPNLFAATGDCGNIDWVFMDMSMPQ) lie on the Periplasmic side of the membrane. C104 and C130 form a disulfide bridge. Residues 145–163 (WMMVVFAIYSSIWFVVLAS) traverse the membrane as a helical segment. Residues 164-171 (RLIGNRAI) lie on the Cytoplasmic side of the membrane.

This sequence belongs to the DsbB family.

The protein localises to the cell inner membrane. Required for disulfide bond formation in some periplasmic proteins. Acts by oxidizing the DsbA protein. This is Disulfide bond formation protein B from Pseudoalteromonas atlantica (strain T6c / ATCC BAA-1087).